The primary structure comprises 416 residues: Hepatic and glial cell adhesion molecule (416 aa).

An N-terminal signal peptide occupies residues 1–33 (MKRERGALSRASRALRLAPFVYLLLIQTDPLEG). The 109-residue stretch at 34–142 (VNITSPVRLI…GEKTINLTVD (109 aa)) folds into the Ig-like V-type domain. Topologically, residues 34–240 (VNITSPVRLI…VKITVYRRSS (207 aa)) are extracellular. Residues asparagine 35, asparagine 138, asparagine 167, and asparagine 189 are each glycosylated (N-linked (GlcNAc...) asparagine). Residues 148 to 234 (PQVLVASTTV…QGRSLPVKIT (87 aa)) form the Ig-like C2-type domain. Cysteines 168 and 217 form a disulfide. The chain crosses the membrane as a helical span at residues 241–261 (LYIILSTGGIFLLVTLVTVCA). The Cytoplasmic segment spans residues 262–416 (CWKPSKRKQK…DEAGPVEISA (155 aa)). The disordered stretch occupies residues 273-416 (LEKQNSLEYM…DEAGPVEISA (144 aa)). Residue serine 278 is modified to Phosphoserine. Residues 285-306 (NDDRLKPEADTLPRSGEQERKN) are compositionally biased toward basic and acidic residues. 2 positions are modified to phosphoserine: serine 350 and serine 377. A compositionally biased stretch (low complexity) spans 383–398 (SSPGRSRSASRTLRTA).

In terms of assembly, homodimer. Dimer formation occurs predominantly through cis interactions on the cell surface. Part of a complex containing MLC1, TRPV4, AQP4 and ATP1B1. Interacts with CLCN2. Post-translationally, N-glycosylated.

Its subcellular location is the cytoplasm. It is found in the cell membrane. Functionally, involved in regulating cell motility and cell-matrix interactions. May inhibit cell growth through suppression of cell proliferation. In glia, associates and targets CLCN2 at astrocytic processes and myelinated fiber tracts where it may regulate transcellular chloride flux involved in neuron excitability. The polypeptide is Hepatic and glial cell adhesion molecule (Homo sapiens (Human)).